Here is a 352-residue protein sequence, read N- to C-terminus: Biotin synthase (352 aa).

Positions 44 to 262 constitute a Radical SAM core domain; it reads NRVQVSTLLS…LAVARILMPK (219 aa). [4Fe-4S] cluster-binding residues include C59, C63, and C66. Residues C103, C134, C194, and R266 each contribute to the [2Fe-2S] cluster site.

It belongs to the radical SAM superfamily. Biotin synthase family. Homodimer. [4Fe-4S] cluster is required as a cofactor. It depends on [2Fe-2S] cluster as a cofactor.

The enzyme catalyses (4R,5S)-dethiobiotin + (sulfur carrier)-SH + 2 reduced [2Fe-2S]-[ferredoxin] + 2 S-adenosyl-L-methionine = (sulfur carrier)-H + biotin + 2 5'-deoxyadenosine + 2 L-methionine + 2 oxidized [2Fe-2S]-[ferredoxin]. It functions in the pathway cofactor biosynthesis; biotin biosynthesis; biotin from 7,8-diaminononanoate: step 2/2. Its function is as follows. Catalyzes the conversion of dethiobiotin (DTB) to biotin by the insertion of a sulfur atom into dethiobiotin via a radical-based mechanism. The sequence is that of Biotin synthase from Pseudomonas putida (strain GB-1).